Here is a 728-residue protein sequence, read N- to C-terminus: Probable ubiquitin-conjugating enzyme protein 17 (728 aa).

Low complexity predominate over residues 1 to 17; sequence MSSQASQRSSSTSAVAQ. Disordered regions lie at residues 1-23 and 123-155; these read MSSQ…RERR and SSRS…GSTR. One can recognise a UBC core domain in the interval 402-568; that stretch reads DRTKRIAKEL…IEHATLNYAI (167 aa). The active-site Glycyl thioester intermediate is Cys495. 2 disordered regions span residues 649 to 678 and 709 to 728; these read PFAK…EAAA and RTQP…STSS. Residues 658 to 678 are compositionally biased toward basic and acidic residues; it reads SERLKREQSEKEEKQKKEAAA. Residues 710–728 show a composition bias toward polar residues; the sequence is TQPTGDYSVPSVNEPSTSS.

This sequence belongs to the ubiquitin-conjugating enzyme family.

The chain is Probable ubiquitin-conjugating enzyme protein 17 (ubc-17) from Caenorhabditis elegans.